The chain runs to 368 residues: Phospho-N-acetylmuramoyl-pentapeptide-transferase (368 aa).

The next 9 helical transmembrane spans lie at 50–70 (LLAL…VVPL), 95–115 (PTMG…ILAG), 117–137 (SPLV…GWLD), 156–176 (LCLQ…QQGW), 183–203 (ITLP…LAVF), 218–238 (LDGL…LWLA), 242–262 (PAIA…LLHN), 284–304 (AIAI…LFVL), and 347–367 (TQVV…CWLL).

This sequence belongs to the glycosyltransferase 4 family. MraY subfamily. The cofactor is Mg(2+).

It localises to the cell inner membrane. It catalyses the reaction UDP-N-acetyl-alpha-D-muramoyl-L-alanyl-gamma-D-glutamyl-meso-2,6-diaminopimeloyl-D-alanyl-D-alanine + di-trans,octa-cis-undecaprenyl phosphate = di-trans,octa-cis-undecaprenyl diphospho-N-acetyl-alpha-D-muramoyl-L-alanyl-D-glutamyl-meso-2,6-diaminopimeloyl-D-alanyl-D-alanine + UMP. Its pathway is cell wall biogenesis; peptidoglycan biosynthesis. Its function is as follows. Catalyzes the initial step of the lipid cycle reactions in the biosynthesis of the cell wall peptidoglycan: transfers peptidoglycan precursor phospho-MurNAc-pentapeptide from UDP-MurNAc-pentapeptide onto the lipid carrier undecaprenyl phosphate, yielding undecaprenyl-pyrophosphoryl-MurNAc-pentapeptide, known as lipid I. This Synechococcus sp. (strain ATCC 27144 / PCC 6301 / SAUG 1402/1) (Anacystis nidulans) protein is Phospho-N-acetylmuramoyl-pentapeptide-transferase.